We begin with the raw amino-acid sequence, 391 residues long: 3-ketoacyl-CoA thiolase (391 aa).

Cys95 serves as the catalytic Acyl-thioester intermediate. Residues His347 and Cys377 each act as proton acceptor in the active site.

It belongs to the thiolase-like superfamily. Thiolase family. Heterotetramer of two alpha chains (FadB) and two beta chains (FadA).

The protein localises to the cytoplasm. The catalysed reaction is an acyl-CoA + acetyl-CoA = a 3-oxoacyl-CoA + CoA. Its pathway is lipid metabolism; fatty acid beta-oxidation. Catalyzes the final step of fatty acid oxidation in which acetyl-CoA is released and the CoA ester of a fatty acid two carbons shorter is formed. The protein is 3-ketoacyl-CoA thiolase of Pseudomonas syringae pv. tomato (strain ATCC BAA-871 / DC3000).